We begin with the raw amino-acid sequence, 220 residues long: Cytidylate kinase (220 aa).

ATP is bound at residue 9–17 (GPAASGKST).

The protein belongs to the cytidylate kinase family. Type 1 subfamily.

The protein localises to the cytoplasm. It carries out the reaction CMP + ATP = CDP + ADP. The catalysed reaction is dCMP + ATP = dCDP + ADP. This chain is Cytidylate kinase, found in Thermotoga maritima (strain ATCC 43589 / DSM 3109 / JCM 10099 / NBRC 100826 / MSB8).